Consider the following 700-residue polypeptide: Methionine--tRNA ligase (700 aa).

Positions 14–24 match the 'HIGH' region motif; that stretch reads PYANGPVHLGH. 4 residues coordinate Zn(2+): C146, C149, C159, and C162. Residues 343–347 carry the 'KMSKS' region motif; that stretch reads KFSKS. K346 contributes to the ATP binding site. The tRNA-binding domain maps to 599 to 700; the sequence is EFEKIDLRVA…GDSIVGKPVK (102 aa).

This sequence belongs to the class-I aminoacyl-tRNA synthetase family. MetG type 1 subfamily. As to quaternary structure, homodimer. Requires Zn(2+) as cofactor.

Its subcellular location is the cytoplasm. The catalysed reaction is tRNA(Met) + L-methionine + ATP = L-methionyl-tRNA(Met) + AMP + diphosphate. Its function is as follows. Is required not only for elongation of protein synthesis but also for the initiation of all mRNA translation through initiator tRNA(fMet) aminoacylation. This is Methionine--tRNA ligase from Chloroherpeton thalassium (strain ATCC 35110 / GB-78).